The primary structure comprises 100 residues: Urease subunit gamma (100 aa).

This sequence belongs to the urease gamma subunit family. In terms of assembly, heterotrimer of UreA (gamma), UreB (beta) and UreC (alpha) subunits. Three heterotrimers associate to form the active enzyme.

It localises to the cytoplasm. It carries out the reaction urea + 2 H2O + H(+) = hydrogencarbonate + 2 NH4(+). The protein operates within nitrogen metabolism; urea degradation; CO(2) and NH(3) from urea (urease route): step 1/1. The polypeptide is Urease subunit gamma (Paraburkholderia phymatum (strain DSM 17167 / CIP 108236 / LMG 21445 / STM815) (Burkholderia phymatum)).